Here is an 83-residue protein sequence, read N- to C-terminus: uncharacterized protein (83 aa).

This is an uncharacterized protein from Bacillus subtilis (strain 168).